A 368-amino-acid polypeptide reads, in one-letter code: tRNA(Met) cytidine acetate ligase (368 aa).

ATP is bound by residues 7–20 (IAEFNPFHNGHKYL), glycine 96, asparagine 152, and arginine 175.

This sequence belongs to the TmcAL family.

Its subcellular location is the cytoplasm. The catalysed reaction is cytidine(34) in elongator tRNA(Met) + acetate + ATP = N(4)-acetylcytidine(34) in elongator tRNA(Met) + AMP + diphosphate. In terms of biological role, catalyzes the formation of N(4)-acetylcytidine (ac(4)C) at the wobble position of elongator tRNA(Met), using acetate and ATP as substrates. First activates an acetate ion to form acetyladenylate (Ac-AMP) and then transfers the acetyl group to tRNA to form ac(4)C34. The protein is tRNA(Met) cytidine acetate ligase of Streptococcus pyogenes serotype M3 (strain SSI-1).